Here is a 241-residue protein sequence, read N- to C-terminus: Proteasome subunit alpha (241 aa).

This sequence belongs to the peptidase T1A family. The 20S proteasome core is composed of 14 alpha and 14 beta subunits that assemble into four stacked heptameric rings, resulting in a barrel-shaped structure. The two inner rings, each composed of seven catalytic beta subunits, are sandwiched by two outer rings, each composed of seven alpha subunits. The catalytic chamber with the active sites is on the inside of the barrel. Has a gated structure, the ends of the cylinder being occluded by the N-termini of the alpha-subunits. Is capped at one or both ends by the proteasome regulatory ATPase, PAN.

It localises to the cytoplasm. Its activity is regulated as follows. The formation of the proteasomal ATPase PAN-20S proteasome complex, via the docking of the C-termini of PAN into the intersubunit pockets in the alpha-rings, triggers opening of the gate for substrate entry. Interconversion between the open-gate and close-gate conformations leads to a dynamic regulation of the 20S proteasome proteolysis activity. Functionally, component of the proteasome core, a large protease complex with broad specificity involved in protein degradation. This Saccharolobus solfataricus (strain ATCC 35092 / DSM 1617 / JCM 11322 / P2) (Sulfolobus solfataricus) protein is Proteasome subunit alpha.